A 227-amino-acid polypeptide reads, in one-letter code: N-(5'-phosphoribosyl)anthranilate isomerase (227 aa).

This sequence belongs to the TrpF family.

The enzyme catalyses N-(5-phospho-beta-D-ribosyl)anthranilate = 1-(2-carboxyphenylamino)-1-deoxy-D-ribulose 5-phosphate. It participates in amino-acid biosynthesis; L-tryptophan biosynthesis; L-tryptophan from chorismate: step 3/5. The chain is N-(5'-phosphoribosyl)anthranilate isomerase from Herminiimonas arsenicoxydans.